The chain runs to 852 residues: Probable inorganic carbon transporter subunit DabA (852 aa).

The Zn(2+) site is built by C370, D372, H554, and C569.

Belongs to the inorganic carbon transporter (TC 9.A.2) DabA family. In terms of assembly, forms a complex with DabB. Zn(2+) is required as a cofactor.

The protein localises to the cell inner membrane. Functionally, part of an energy-coupled inorganic carbon pump. The polypeptide is Probable inorganic carbon transporter subunit DabA (Novosphingobium aromaticivorans (strain ATCC 700278 / DSM 12444 / CCUG 56034 / CIP 105152 / NBRC 16084 / F199)).